Here is a 526-residue protein sequence, read N- to C-terminus: Probable lipid II flippase MurJ (526 aa).

A run of 14 helical transmembrane segments spans residues 35 to 55 (LMGT…PNLF), 58 to 78 (LFAE…HYSM), 96 to 116 (AIFT…ILGA), 137 to 157 (MFPY…LHSI), 160 to 180 (FVPS…SMYF), 190 to 210 (IAAA…QLIF), 235 to 255 (IIAL…NDLV), 281 to 301 (LLGI…SFHV), 313 to 333 (LITA…FVLF), 362 to 382 (WHSV…AFYA), 391 to 411 (IAGT…FIPL), 415 to 435 (GIAF…WMFL), 459 to 479 (LFSV…AYFF), and 489 to 509 (GVPL…LLLL).

The protein belongs to the MurJ/MviN family.

The protein resides in the cell inner membrane. Its pathway is cell wall biogenesis; peptidoglycan biosynthesis. In terms of biological role, involved in peptidoglycan biosynthesis. Transports lipid-linked peptidoglycan precursors from the inner to the outer leaflet of the cytoplasmic membrane. The protein is Probable lipid II flippase MurJ of Treponema pallidum (strain Nichols).